The following is a 61-amino-acid chain: Alpha-conotoxin-like PnMGMR-02 (61 aa).

The N-terminal stretch at 1–21 (MGMRMMFTVFLLVVLATTVVS) is a signal peptide. Positions 22 to 44 (FTSDRASDGGNAAASDLIALTIK) are excised as a propeptide. Cystine bridges form between Cys46/Cys52 and Cys47/Cys60. Residues 48–50 (SRP) form a ser-Xaa-Pro motif, crucial for potent interaction with nAChR region. Cys60 is modified (cysteine amide).

It belongs to the conotoxin A superfamily. In terms of tissue distribution, expressed by the venom duct.

It localises to the secreted. Functionally, alpha-conotoxins act on postsynaptic membranes, they bind to the nicotinic acetylcholine receptors (nAChR) and thus inhibit them. This toxin blocks mammalian nAChRs (alpha-7 &gt; alpha-3/beta-2). This Conus pennaceus (Feathered cone) protein is Alpha-conotoxin-like PnMGMR-02.